The chain runs to 324 residues: HPr kinase/phosphorylase (324 aa).

Catalysis depends on residues histidine 146 and lysine 167. 161-168 provides a ligand contact to ATP; sequence GDSGLGKS. Serine 168 is a Mg(2+) binding site. Aspartate 185 acts as the Proton acceptor; for phosphorylation activity. Proton donor; for dephosphorylation activity in catalysis. The tract at residues 209-218 is important for the catalytic mechanism of both phosphorylation and dephosphorylation; the sequence is LEVRGLGLLD. Glutamate 210 provides a ligand contact to Mg(2+). Arginine 250 is an active-site residue. An important for the catalytic mechanism of dephosphorylation region spans residues 271–276; sequence QVAAGR.

Belongs to the HPrK/P family. As to quaternary structure, homohexamer. It depends on Mg(2+) as a cofactor.

It carries out the reaction [HPr protein]-L-serine + ATP = [HPr protein]-O-phospho-L-serine + ADP + H(+). The enzyme catalyses [HPr protein]-O-phospho-L-serine + phosphate + H(+) = [HPr protein]-L-serine + diphosphate. Catalyzes the ATP- as well as the pyrophosphate-dependent phosphorylation of a specific serine residue in HPr, a phosphocarrier protein of the phosphoenolpyruvate-dependent sugar phosphotransferase system (PTS). HprK/P also catalyzes the pyrophosphate-producing, inorganic phosphate-dependent dephosphorylation (phosphorolysis) of seryl-phosphorylated HPr (P-Ser-HPr). This is HPr kinase/phosphorylase from Ralstonia pickettii (strain 12J).